Consider the following 275-residue polypeptide: MNGEARSRVVDQEAGSTPSTLRDEDHPSRQRLFGCLPYDIDLNPLRIVMAELVGTFILMFSVCGVISSTQLSGGHVGLLEYAVTAGLSVVVVVYSIGHISGAHLNPSITIAFAVFGGFPWSQVPLYITAQTLGATAATLVGVSVYGVNADIMATKPALSCVSAFFVELIATSIVVFLASALHCGPHQNLGNLTGFVIGTVISLGVLITGPISGGSMNPARSLGPAVVAWDFEDLWIYMTAPVIGAIIGVLTYRSISLKTRPCPSPVSPSVSSLLR.

Residues 1 to 11 (MNGEARSRVVD) are compositionally biased toward basic and acidic residues. The tract at residues 1–26 (MNGEARSRVVDQEAGSTPSTLRDEDH) is disordered. Transmembrane regions (helical) follow at residues 47–67 (IVMA…GVIS) and 76–96 (VGLL…VYSI). The short motif at 105–107 (NPS) is the NPA 1 element. Helical transmembrane passes span 127–147 (ITAQ…VYGV), 161–181 (VSAF…ASAL), and 192–212 (LTGF…GPIS). An NPA 2 motif is present at residues 217 to 219 (NPA). A helical membrane pass occupies residues 231–251 (FEDLWIYMTAPVIGAIIGVLT). Phosphoserine is present on serine 272.

It belongs to the MIP/aquaporin (TC 1.A.8) family. NIP (TC 1.A.8.12) subfamily. Expressed in floral buds.

It is found in the membrane. Aquaporins facilitate the transport of water and small neutral solutes across cell membranes. This is Probable aquaporin NIP7-1 (NIP7-1) from Arabidopsis thaliana (Mouse-ear cress).